A 274-amino-acid chain; its full sequence is F-box protein SKIP5 (274 aa).

Residues 32-79 (LTSLNNLDDGCLMHILSFLSPIPDRYNTALVCHRWRYLACHPRLWLRV) enclose the F-box domain.

As to quaternary structure, part of a SCF (SKP1-cullin-F-box) protein ligase complex. Interacts with SKP1A/ASK1.

It functions in the pathway protein modification; protein ubiquitination. The sequence is that of F-box protein SKIP5 (SKIP5) from Arabidopsis thaliana (Mouse-ear cress).